The chain runs to 148 residues: Ubiquitin-conjugating enzyme E2 4 (148 aa).

The tract at residues 1–22 (MSSSKRIAKELSDLERDPPTSC) is disordered. One can recognise a UBC core domain in the interval 2–148 (SSSKRIAKEL…AREWTKKYAV (147 aa)). The segment covering 7–18 (IAKELSDLERDP) has biased composition (basic and acidic residues). A Phosphoserine modification is found at serine 12. Residue cysteine 86 is the Glycyl thioester intermediate of the active site. Residue lysine 91 forms a Glycyl lysine isopeptide (Lys-Gly) (interchain with G-Cter in ubiquitin) linkage.

Belongs to the ubiquitin-conjugating enzyme family. In terms of assembly, interacts with TUL1. In terms of processing, the N-terminus is blocked.

It catalyses the reaction S-ubiquitinyl-[E1 ubiquitin-activating enzyme]-L-cysteine + [E2 ubiquitin-conjugating enzyme]-L-cysteine = [E1 ubiquitin-activating enzyme]-L-cysteine + S-ubiquitinyl-[E2 ubiquitin-conjugating enzyme]-L-cysteine.. It functions in the pathway protein modification; protein ubiquitination. Functionally, E2 ubiquitin-conjugating enzyme that catalyzes the covalent attachment of ubiquitin to other proteins. Mediates the selective degradation of short-lived and abnormal proteins. Mediates ubiquitination of PEX5. In Saccharomyces cerevisiae (strain ATCC 204508 / S288c) (Baker's yeast), this protein is Ubiquitin-conjugating enzyme E2 4.